The following is a 615-amino-acid chain: ABC transporter G family member 22 (615 aa).

The ABC transporter domain occupies 31–279; that stretch reads ITFKDLAYSV…EIGFPFPDQT (249 aa). Position 67–74 (67–74) interacts with ATP; it reads GPSGSGKT. An ABC transmembrane type-2 domain is found at 364–610; sequence SNCLVRFAVA…TMVFLCLHYF (247 aa). The next 6 helical transmembrane spans lie at 370–390, 400–420, 442–462, 477–497, 508–528, and 587–607; these read FAVAVFVGLLFGACFSGLGMD, VLFYLVINMILQPFASISLFI, LALMFFEILACIGTAFILGTI, FFAMAILTLAHLAGDFFMLII, FAVGAGVATIYQLFAGFFVPI, and INLIIVSSFAFAFFTMVFLCL.

The protein belongs to the ABC transporter superfamily. ABCG family. Eye pigment precursor importer (TC 3.A.1.204) subfamily.

The protein resides in the membrane. May be involved in cell migration. This Dictyostelium discoideum (Social amoeba) protein is ABC transporter G family member 22 (abcG22).